Here is a 406-residue protein sequence, read N- to C-terminus: Argininosuccinate synthase (406 aa).

ATP is bound by residues 12–20 (AYSGGLDTS) and alanine 39. Positions 90 and 95 each coordinate L-citrulline. Residue glycine 120 coordinates ATP. Threonine 122, asparagine 126, and aspartate 127 together coordinate L-aspartate. Asparagine 126 provides a ligand contact to L-citrulline. Residues arginine 130, serine 179, serine 188, glutamate 264, and tyrosine 276 each coordinate L-citrulline.

Belongs to the argininosuccinate synthase family. Type 1 subfamily. As to quaternary structure, homotetramer.

Its subcellular location is the cytoplasm. The catalysed reaction is L-citrulline + L-aspartate + ATP = 2-(N(omega)-L-arginino)succinate + AMP + diphosphate + H(+). Its pathway is amino-acid biosynthesis; L-arginine biosynthesis; L-arginine from L-ornithine and carbamoyl phosphate: step 2/3. This chain is Argininosuccinate synthase, found in Geotalea uraniireducens (strain Rf4) (Geobacter uraniireducens).